The following is a 370-amino-acid chain: Protein PAM71, chloroplastic (370 aa).

Residues methionine 1–cysteine 38 are disordered. A chloroplast-targeting transit peptide spans methionine 1–arginine 73. A compositionally biased stretch (low complexity) spans serine 22–cysteine 38. The Stromal portion of the chain corresponds to cysteine 74–arginine 113. A helical transmembrane segment spans residues valine 114–alanine 134. Residues alanine 135 to serine 161 are Lumenal, thylakoid-facing. A helical transmembrane segment spans residues alanine 162 to leucine 182. Over alanine 183–alanine 188 the chain is Stromal. A helical membrane pass occupies residues alanine 189 to leucine 209. Over glycine 210 to aspartate 228 the chain is Lumenal, thylakoid. Residues leucine 229–leucine 249 traverse the membrane as a helical segment. The Stromal portion of the chain corresponds to aspartate 250 to asparagine 275. Residues glycine 276–alanine 296 traverse the membrane as a helical segment. Residues glutamate 297–proline 315 are Lumenal, thylakoid-facing. Residues leucine 316–glycine 336 traverse the membrane as a helical segment. Residues glycine 337–alanine 348 are Stromal-facing. Residues isoleucine 349–valine 369 form a helical membrane-spanning segment. A topological domain (lumenal, thylakoid) is located at residue threonine 370.

This sequence belongs to the GDT1 family. In terms of assembly, homodimer.

Its subcellular location is the plastid. The protein localises to the chloroplast membrane. The protein resides in the thylakoid. Its function is as follows. Mn(2+)/H(+) exchanger, which transport Mn(2+)from the chloroplast stroma into the acidic thylakoid lumen. Might be a chloroplast-localized Ca(2+)/H(+) antiporter. Regulates Ca(2+), Mn(2+) and pH homeostasis. Required for chloroplast development. The protein is Protein PAM71, chloroplastic of Arabidopsis thaliana (Mouse-ear cress).